A 156-amino-acid polypeptide reads, in one-letter code: Transcription elongation factor GreA (156 aa).

Residues 1-84 (MAKYTISKHR…IEDVLRSTDE (84 aa)) adopt a coiled-coil conformation.

This sequence belongs to the GreA/GreB family.

Its function is as follows. Necessary for efficient RNA polymerase transcription elongation past template-encoded arresting sites. The arresting sites in DNA have the property of trapping a certain fraction of elongating RNA polymerases that pass through, resulting in locked ternary complexes. Cleavage of the nascent transcript by cleavage factors such as GreA or GreB allows the resumption of elongation from the new 3'terminus. GreA releases sequences of 2 to 3 nucleotides. In Ureaplasma parvum serovar 3 (strain ATCC 27815 / 27 / NCTC 11736), this protein is Transcription elongation factor GreA.